Consider the following 1843-residue polypeptide: Protein TIC 214 (1843 aa).

6 helical membrane-spanning segments follow: residues 18–38 (IINSVVVVGLYYGFLTTFSIG), 64–84 (FITGQLMMFISIYYAPLHLAL), 87–107 (PHTITVLVLPYLLFHFFWNNH), 124–144 (LSIQCVFLNNLIFQLFNHFIL), 172–192 (VGWLIGHILFMKWVGLVLFWI), and 217–237 (IFSILLFITCVYYLGRIPSPI). 5 disordered regions span residues 244–281 (ETSKTEEREESEEETDVEIETTSETKGTKQEQEGAAEK), 557–576 (EEIENDEESKPDHGIRSRKA), 582–647 (FTDN…DEVA), 724–744 (NSEEEDTKEKEKKREEKRQEN), and 1527–1586 (SLEL…KKKK). Positions 251 to 264 (REESEEETDVEIET) are enriched in acidic residues. The segment covering 269–281 (KGTKQEQEGAAEK) has biased composition (basic and acidic residues). Residues 590 to 639 (NTPTSTTETTSTAETTSTTETTSTTKNTSTTKNTSTTETTSTTENENTSN) are compositionally biased toward low complexity. Composition is skewed to basic and acidic residues over residues 730 to 744 (TKEKEKKREEKRQEN) and 1527 to 1540 (SLELKNKEEKKKPA). A compositionally biased stretch (polar residues) spans 1543-1562 (NIGSDTQKQGNPGSDPSTQQ). Basic and acidic residues predominate over residues 1563–1580 (KDIKKNVKEDYDGRSDIQ).

It belongs to the TIC214 family. Part of the Tic complex.

It localises to the plastid. The protein localises to the chloroplast inner membrane. Involved in protein precursor import into chloroplasts. May be part of an intermediate translocation complex acting as a protein-conducting channel at the inner envelope. The sequence is that of Protein TIC 214 from Nandina domestica (Heavenly bamboo).